A 213-amino-acid chain; its full sequence is 3-isopropylmalate dehydratase small subunit (213 aa).

It belongs to the LeuD family. LeuD type 1 subfamily. In terms of assembly, heterodimer of LeuC and LeuD.

The enzyme catalyses (2R,3S)-3-isopropylmalate = (2S)-2-isopropylmalate. Its pathway is amino-acid biosynthesis; L-leucine biosynthesis; L-leucine from 3-methyl-2-oxobutanoate: step 2/4. In terms of biological role, catalyzes the isomerization between 2-isopropylmalate and 3-isopropylmalate, via the formation of 2-isopropylmaleate. In Magnetococcus marinus (strain ATCC BAA-1437 / JCM 17883 / MC-1), this protein is 3-isopropylmalate dehydratase small subunit.